A 187-amino-acid polypeptide reads, in one-letter code: Flavin prenyltransferase LpdB (187 aa).

Residues 10–12 (GAS), Ser37, 88–91 (SMKT), and Arg123 each bind FMN. Residues Tyr153 and Lys169 each contribute to the dimethylallyl phosphate site.

Belongs to the UbiX/PAD1 family.

The enzyme catalyses dimethylallyl phosphate + FMNH2 = prenylated FMNH2 + phosphate. Its function is as follows. Involved in tannin degradation. Flavin prenyltransferase that catalyzes the synthesis of the prenylated FMN cofactor (prenyl-FMN) for gallate decarboxylase LpdC. The prenyltransferase is metal-independent and links a dimethylallyl moiety from dimethylallyl monophosphate (DMAP) to the flavin N5 and C6 atoms of FMN. The chain is Flavin prenyltransferase LpdB from Lactiplantibacillus plantarum (strain ATCC BAA-793 / NCIMB 8826 / WCFS1) (Lactobacillus plantarum).